Reading from the N-terminus, the 937-residue chain is Chaperone protein ClpD2, chloroplastic (937 aa).

The transit peptide at 1–80 (MEACCCSSSS…FERFTERAVK (80 aa)) directs the protein to the chloroplast. 2 repeat regions span residues 81–137 (AVVF…VGKE) and 152–217 (FSGA…VQGE). The Clp R domain occupies 81–217 (AVVFSQREAR…KQALTRVQGE (137 aa)). The tract at residues 259–513 (LALFCLDLTM…RMESFKRKKE (255 aa)) is i. ATP contacts are provided by residues 304 to 311 (GEAGVGKT) and 658 to 665 (GPTGVGKT). Residues 584 to 775 (VGSEEIARVT…LIVMTSNVGS (192 aa)) form an II region.

This sequence belongs to the ClpA/ClpB family. ClpD subfamily. As to expression, highly expressed in stems, culms and leaves.

Its subcellular location is the plastid. It is found in the chloroplast. In terms of biological role, molecular chaperone that may interact with a ClpP-like protease involved in degradation of denatured proteins in the chloroplast. In Oryza sativa subsp. japonica (Rice), this protein is Chaperone protein ClpD2, chloroplastic (CLPD2).